The chain runs to 221 residues: 5'-nucleotidase (221 aa).

Asp-14 serves as the catalytic Nucleophile.

The protein belongs to the HAD-like hydrolase superfamily. The cofactor is Mn(2+). Mg(2+) is required as a cofactor.

It carries out the reaction a ribonucleoside 5'-phosphate + H2O = a ribonucleoside + phosphate. Functionally, specifically dephosphorylates nucleoside 5'-monophosphates to nucleosides and inorganic phosphate. Displays high activity toward 5'-UMP and 5'-IMP, significant activity against 5'-XMP and 5'-TMP, and low activity against 5'-CMP. The sequence is that of 5'-nucleotidase from Pseudomonas aeruginosa (strain ATCC 15692 / DSM 22644 / CIP 104116 / JCM 14847 / LMG 12228 / 1C / PRS 101 / PAO1).